The following is a 1409-amino-acid chain: DNA-directed RNA polymerase subunit beta' (1409 aa).

Positions 70, 72, 85, and 88 each coordinate Zn(2+). Residues Asp-458, Asp-460, and Asp-462 each contribute to the Mg(2+) site. 4 residues coordinate Zn(2+): Cys-813, Cys-887, Cys-894, and Cys-897.

Belongs to the RNA polymerase beta' chain family. In terms of assembly, the RNAP catalytic core consists of 2 alpha, 1 beta, 1 beta' and 1 omega subunit. When a sigma factor is associated with the core the holoenzyme is formed, which can initiate transcription. Mg(2+) serves as cofactor. It depends on Zn(2+) as a cofactor.

The enzyme catalyses RNA(n) + a ribonucleoside 5'-triphosphate = RNA(n+1) + diphosphate. In terms of biological role, DNA-dependent RNA polymerase catalyzes the transcription of DNA into RNA using the four ribonucleoside triphosphates as substrates. The protein is DNA-directed RNA polymerase subunit beta' of Acidovorax ebreus (strain TPSY) (Diaphorobacter sp. (strain TPSY)).